The primary structure comprises 70 residues: Putative membrane protein insertion efficiency factor (70 aa).

Belongs to the UPF0161 family.

It is found in the cell membrane. In terms of biological role, could be involved in insertion of integral membrane proteins into the membrane. This is Putative membrane protein insertion efficiency factor from Finegoldia magna (strain ATCC 29328 / DSM 20472 / WAL 2508) (Peptostreptococcus magnus).